A 1163-amino-acid chain; its full sequence is DNA-directed RNA polymerase subunit beta'' (1163 aa).

Zn(2+)-binding residues include Cys16, Cys87, Cys94, and Cys97.

This sequence belongs to the RNA polymerase beta' chain family. RpoC2 subfamily. As to quaternary structure, in plastids the minimal PEP RNA polymerase catalytic core is composed of four subunits: alpha, beta, beta', and beta''. When a (nuclear-encoded) sigma factor is associated with the core the holoenzyme is formed, which can initiate transcription. Zn(2+) is required as a cofactor.

The protein localises to the plastid. Its subcellular location is the chloroplast. The enzyme catalyses RNA(n) + a ribonucleoside 5'-triphosphate = RNA(n+1) + diphosphate. DNA-dependent RNA polymerase catalyzes the transcription of DNA into RNA using the four ribonucleoside triphosphates as substrates. In Pisum sativum (Garden pea), this protein is DNA-directed RNA polymerase subunit beta'' (rpoC2).